We begin with the raw amino-acid sequence, 354 residues long: Uroporphyrinogen decarboxylase (354 aa).

Residues Arg-27–Arg-31, Asp-77, Tyr-154, Ser-209, and His-327 each bind substrate.

The protein belongs to the uroporphyrinogen decarboxylase family. In terms of assembly, homodimer.

The protein resides in the cytoplasm. The enzyme catalyses uroporphyrinogen III + 4 H(+) = coproporphyrinogen III + 4 CO2. It participates in porphyrin-containing compound metabolism; protoporphyrin-IX biosynthesis; coproporphyrinogen-III from 5-aminolevulinate: step 4/4. Functionally, catalyzes the decarboxylation of four acetate groups of uroporphyrinogen-III to yield coproporphyrinogen-III. The chain is Uroporphyrinogen decarboxylase from Shewanella baltica (strain OS223).